The chain runs to 577 residues: Probable cytochrome c biosynthesis protein (577 aa).

It belongs to the CcmF/CycK/Ccl1/NrfE/CcsA family.

It is found in the mitochondrion. In terms of biological role, could be involved in assembly and maturation of cytochromes c. May play a role in guidance of apocytochromes and heme groups for the covalent linkage introduced by the cytochrome-c-heme lyase. This is Probable cytochrome c biosynthesis protein from Oenothera berteroana (Bertero's evening primrose).